A 325-amino-acid polypeptide reads, in one-letter code: GTP 3',8-cyclase (325 aa).

The 216-residue stretch at 4 to 219 (NYNRNINYLR…HGLQQKFGLL (216 aa)) folds into the Radical SAM core domain. Arg13 contributes to the GTP binding site. [4Fe-4S] cluster-binding residues include Cys20 and Cys24. Tyr26 provides a ligand contact to S-adenosyl-L-methionine. Cys27 is a [4Fe-4S] cluster binding site. Arg63 contributes to the GTP binding site. An S-adenosyl-L-methionine-binding site is contributed by Gly67. Thr94 contributes to the GTP binding site. Ser118 contributes to the S-adenosyl-L-methionine binding site. Lys155 contacts GTP. Met189 serves as a coordination point for S-adenosyl-L-methionine. 2 residues coordinate [4Fe-4S] cluster: Cys254 and Cys257. 259-261 (RLR) contacts GTP. Residue Cys271 coordinates [4Fe-4S] cluster.

This sequence belongs to the radical SAM superfamily. MoaA family. Monomer and homodimer. It depends on [4Fe-4S] cluster as a cofactor.

It catalyses the reaction GTP + AH2 + S-adenosyl-L-methionine = (8S)-3',8-cyclo-7,8-dihydroguanosine 5'-triphosphate + 5'-deoxyadenosine + L-methionine + A + H(+). It participates in cofactor biosynthesis; molybdopterin biosynthesis. In terms of biological role, catalyzes the cyclization of GTP to (8S)-3',8-cyclo-7,8-dihydroguanosine 5'-triphosphate. The chain is GTP 3',8-cyclase from Desulforamulus reducens (strain ATCC BAA-1160 / DSM 100696 / MI-1) (Desulfotomaculum reducens).